Here is a 210-residue protein sequence, read N- to C-terminus: Small ribosomal subunit protein uS3 (210 aa).

One can recognise a KH type-2 domain in the interval 39–107 (IREKLMEKLK…EILLDIQEVK (69 aa)).

Belongs to the universal ribosomal protein uS3 family. Part of the 30S ribosomal subunit. Forms a tight complex with proteins S10 and S14.

In terms of biological role, binds the lower part of the 30S subunit head. Binds mRNA in the 70S ribosome, positioning it for translation. This is Small ribosomal subunit protein uS3 from Opitutus terrae (strain DSM 11246 / JCM 15787 / PB90-1).